The following is a 151-amino-acid chain: Cathelicidin-3 (151 aa).

A signal peptide spans 1 to 17; sequence MLSCWVLLLALLGGACA. The propeptide occupies 18 to 122; sequence LPAPLGYSQA…TCVDSMADPV (105 aa). Disulfide bonds link C75-C86 and C97-C114. Residues 128–148 traverse the membrane as a helical segment; sequence WPLVPVAINTVAAGINLYKAI.

The protein belongs to the cathelicidin family. In terms of tissue distribution, detected in bone marrow, liver and lung.

It localises to the secreted. Its subcellular location is the membrane. Its function is as follows. May bind bacterial lipopolysaccharide (LPS). May have antimicrobial activity and play a role in the innate immune response. The chain is Cathelicidin-3 (CATHL3) from Gallus gallus (Chicken).